We begin with the raw amino-acid sequence, 145 residues long: D-aminoacyl-tRNA deacylase (145 aa).

The Gly-cisPro motif, important for rejection of L-amino acids motif lies at 137-138 (GP).

Belongs to the DTD family. In terms of assembly, homodimer.

The protein localises to the cytoplasm. It carries out the reaction glycyl-tRNA(Ala) + H2O = tRNA(Ala) + glycine + H(+). The catalysed reaction is a D-aminoacyl-tRNA + H2O = a tRNA + a D-alpha-amino acid + H(+). In terms of biological role, an aminoacyl-tRNA editing enzyme that deacylates mischarged D-aminoacyl-tRNAs. Also deacylates mischarged glycyl-tRNA(Ala), protecting cells against glycine mischarging by AlaRS. Acts via tRNA-based rather than protein-based catalysis; rejects L-amino acids rather than detecting D-amino acids in the active site. By recycling D-aminoacyl-tRNA to D-amino acids and free tRNA molecules, this enzyme counteracts the toxicity associated with the formation of D-aminoacyl-tRNA entities in vivo and helps enforce protein L-homochirality. The chain is D-aminoacyl-tRNA deacylase from Streptomyces avermitilis (strain ATCC 31267 / DSM 46492 / JCM 5070 / NBRC 14893 / NCIMB 12804 / NRRL 8165 / MA-4680).